The following is a 67-amino-acid chain: Conotoxin TsMMSK-B021 (67 aa).

The first 20 residues, 1–20 (MMSKLGVLLTICLLLFPLTA), serve as a signal peptide directing secretion. Positions 21 to 50 (VQLDGDQPADLPELRAQDFAPERSPWFDPV) are excised as a propeptide. Intrachain disulfides connect Cys-53–Cys-65, Cys-54–Cys-61, and Cys-58–Cys-64. Pro-63 carries the post-translational modification 4-hydroxyproline.

This sequence belongs to the conotoxin M superfamily. Expressed by the venom duct.

Its subcellular location is the secreted. This Conus tessulatus (Tessellate cone) protein is Conotoxin TsMMSK-B021.